The following is a 664-amino-acid chain: Alcohol oxidase (664 aa).

8 to 39 provides a ligand contact to FAD; sequence DIIVVGGGSTGCCIAGRLANLDDQNLTVALIE. His-568 (proton acceptor) is an active-site residue. Positions 662-664 match the Microbody targeting signal motif; it reads ARF.

It belongs to the GMC oxidoreductase family. As to quaternary structure, homooctamer. FAD is required as a cofactor.

The protein localises to the peroxisome matrix. The catalysed reaction is a primary alcohol + O2 = an aldehyde + H2O2. Its pathway is energy metabolism; methane degradation. In terms of biological role, catalyzes the oxidation of methanol to formaldehyde and hydrogen peroxide, the first step in the methanol utilization pathway of methylotrophic yeasts. The protein is Alcohol oxidase (MOX) of Pichia angusta (Yeast).